Here is a 168-residue protein sequence, read N- to C-terminus: Phosphopantetheine adenylyltransferase (168 aa).

Threonine 13 serves as a coordination point for substrate. Residues 13 to 14 (TF) and histidine 21 each bind ATP. The substrate site is built by lysine 45, leucine 78, and arginine 92. ATP-binding positions include 93-95 (GLR), glutamate 103, and 128-134 (TQFISSG).

It belongs to the bacterial CoaD family. As to quaternary structure, homohexamer. Requires Mg(2+) as cofactor.

It is found in the cytoplasm. The catalysed reaction is (R)-4'-phosphopantetheine + ATP + H(+) = 3'-dephospho-CoA + diphosphate. It participates in cofactor biosynthesis; coenzyme A biosynthesis; CoA from (R)-pantothenate: step 4/5. Functionally, reversibly transfers an adenylyl group from ATP to 4'-phosphopantetheine, yielding dephospho-CoA (dPCoA) and pyrophosphate. The sequence is that of Phosphopantetheine adenylyltransferase from Wolbachia sp. subsp. Drosophila simulans (strain wRi).